Consider the following 197-residue polypeptide: Transcription factor FapR (197 aa).

The protein belongs to the FapR family.

Its function is as follows. Transcriptional factor involved in regulation of membrane lipid biosynthesis by repressing genes involved in fatty acid and phospholipid metabolism. The chain is Transcription factor FapR from Bacillus cereus (strain B4264).